The chain runs to 187 residues: dITP/XTP pyrophosphatase (187 aa).

7 to 12 is a binding site for substrate; the sequence is TNNPYK. Mg(2+) contacts are provided by E36 and D65. The Proton acceptor role is filled by D65. Substrate contacts are provided by residues T66, 140-143, K163, and 168-169; these read FGYD and HR.

It belongs to the HAM1 NTPase family. In terms of assembly, homodimer. Mg(2+) serves as cofactor.

The catalysed reaction is XTP + H2O = XMP + diphosphate + H(+). It carries out the reaction dITP + H2O = dIMP + diphosphate + H(+). The enzyme catalyses ITP + H2O = IMP + diphosphate + H(+). Pyrophosphatase that catalyzes the hydrolysis of nucleoside triphosphates to their monophosphate derivatives, with a high preference for the non-canonical purine nucleotides XTP (xanthosine triphosphate), dITP (deoxyinosine triphosphate) and ITP. Seems to function as a house-cleaning enzyme that removes non-canonical purine nucleotides from the nucleotide pool, thus preventing their incorporation into DNA/RNA and avoiding chromosomal lesions. This Pyrobaculum aerophilum (strain ATCC 51768 / DSM 7523 / JCM 9630 / CIP 104966 / NBRC 100827 / IM2) protein is dITP/XTP pyrophosphatase.